We begin with the raw amino-acid sequence, 389 residues long: MKISSLGWVLVLIFISITIVSSAPAPKPPKPKPAPAPTPPKPKPTPAPTPPKPKPKPAPTPPKPKPAPAPTPPKPKPAPAPTPPKPKPKPAPTPPNPKPTPAPTPPKPKPAPAPAPTPAPKPKPAPKPAPGGEVEDETEFSYETKGNKGPAKWGTLDAEWKMCGIGKMQSPIDLRDKNVVVSNKFGLLRSQYLPSNTTIKNRGHDIMLKFKGGNKGIGVTIRGTRYQLQQLHWHSPSEHTINGKRFALEEHLVHESKDKRYAVVAFLYNLGASDPFLFSLEKQLKKITDTHASEEHVGIIDPKKLSFESKHYYRYSGSLTAPPCSENVIWSVSKEIRTVSSKQVKLLRVAVHDASDSNARPLQAVNKRKVYLYKPKVKLMKKYCNISSY.

Positions 1-22 (MKISSLGWVLVLIFISITIVSS) are cleaved as a signal peptide. The interval 21 to 153 (SSAPAPKPPK…TKGNKGPAKW (133 aa)) is disordered. Residues 25 to 129 (APKPPKPKPA…PKPKPAPKPA (105 aa)) show a composition bias toward pro residues. Residues 138–374 (TEFSYETKGN…VNKRKVYLYK (237 aa)) enclose the Alpha-carbonic anhydrase domain. Cys-163 and Cys-324 are joined by a disulfide. N-linked (GlcNAc...) asparagine glycosylation is present at Asn-196. Catalysis depends on His-204, which acts as the Proton acceptor. His-232, His-234, and His-251 together coordinate Zn(2+). 320 to 321 (TA) provides a ligand contact to substrate. The N-linked (GlcNAc...) asparagine glycan is linked to Asn-385.

It belongs to the alpha-class carbonic anhydrase family. Zn(2+) is required as a cofactor. Post-translationally, N-glycosylated.

It localises to the plastid. It is found in the chloroplast stroma. It carries out the reaction hydrogencarbonate + H(+) = CO2 + H2O. In terms of biological role, reversible hydration of carbon dioxide. In Arabidopsis thaliana (Mouse-ear cress), this protein is Alpha carbonic anhydrase 8 (ACA8).